A 38-amino-acid polypeptide reads, in one-letter code: Large ribosomal subunit protein bL36 (38 aa).

Belongs to the bacterial ribosomal protein bL36 family.

This chain is Large ribosomal subunit protein bL36, found in Pseudothermotoga lettingae (strain ATCC BAA-301 / DSM 14385 / NBRC 107922 / TMO) (Thermotoga lettingae).